The following is a 226-amino-acid chain: Probable proteasome subunit beta type-1 (226 aa).

A propeptide spans 1–24 (MATTVKDTMNVDINAIKKGEIRMG) (removed in mature form). The active-site Nucleophile is the threonine 25.

The protein belongs to the peptidase T1B family. In terms of assembly, the 26S proteasome consists of a 20S proteasome core and two 19S regulatory subunits. The 20S proteasome core is composed of 28 subunits that are arranged in four stacked rings, resulting in a barrel-shaped structure. The two end rings are each formed by seven alpha subunits, and the two central rings are each formed by seven beta subunits. The catalytic chamber with the active sites is on the inside of the barrel.

Its subcellular location is the cytoplasm. It localises to the nucleus. It carries out the reaction Cleavage of peptide bonds with very broad specificity.. In terms of biological role, the proteasome is a multicatalytic proteinase complex which is characterized by its ability to cleave peptides with Arg, Phe, Tyr, Leu, and Glu adjacent to the leaving group at neutral or slightly basic pH. The proteasome has an ATP-dependent proteolytic activity. In Schizosaccharomyces pombe (strain 972 / ATCC 24843) (Fission yeast), this protein is Probable proteasome subunit beta type-1 (pre3).